A 358-amino-acid chain; its full sequence is Oxidase FUB9 (358 aa).

Residues 6 to 350 (SSKPQIFSIQ…SPAHLSILNA (345 aa)) enclose the FMN hydroxy acid dehydrogenase domain. An a 2-oxocarboxylate-binding site is contributed by tyrosine 32. FMN is bound by residues serine 114, glutamine 138, and threonine 166. Position 175 (arginine 175) interacts with a 2-oxocarboxylate. Lysine 221 contacts FMN. Histidine 245 acts as the Proton acceptor in catalysis. Arginine 248 lines the a 2-oxocarboxylate pocket. FMN is bound by residues 276-280 (DGGFR) and 299-300 (GR).

It belongs to the FMN-dependent alpha-hydroxy acid dehydrogenase family. It depends on FMN as a cofactor.

Its pathway is mycotoxin biosynthesis. Oxidase; part of the gene cluster that mediates the biosynthesis of fusaric acid, a mycotoxin with low to moderate toxicity to animals and humans, but with high phytotoxic properties. L-aspartate is suggested as fusaric acid amino acid precursor that is activated and further processed to O-acetyl-L-homoserine by cluster enzymes aspartate kinase FUB3 and homoserine O-acetyltransferase FUB5, as well as enzymes of the primary metabolism. The polyketide synthase (PKS) FUB1 generates the triketide trans-2-hexenal which is presumptively released by the hydrolase FUB4 and linked to the NRPS-bound amino acid precursor by NAD(P)-dependent dehydrogenase FUB6. FUB1, FUB4, and the non-canonical NRPS Fub8 may form an enzyme complex. Further processing of the NRPS-bound intermediate might be carried out by FUB6 and the sulfhydrylase FUB7, enabling a spontaneous electrocyclization to close the carbon backbone of fusaric acid. Dihydrofusaric acid is likely to be released via reduction by the thioester reductase (TR) domain of FUB8 whereupon the final oxidation to fusaric acid may (also) be performed by the FMN-dependent dehydrogenase FUB9. This is Oxidase FUB9 from Gibberella fujikuroi (strain CBS 195.34 / IMI 58289 / NRRL A-6831) (Bakanae and foot rot disease fungus).